Here is a 341-residue protein sequence, read N- to C-terminus: Biotin synthase (341 aa).

The 230-residue stretch at 56-285 (ADIQRAALLS…KARVRLSAGR (230 aa)) folds into the Radical SAM core domain. [4Fe-4S] cluster-binding residues include Cys-71, Cys-75, and Cys-78. Cys-116, Cys-148, Cys-208, and Arg-280 together coordinate [2Fe-2S] cluster.

This sequence belongs to the radical SAM superfamily. Biotin synthase family. In terms of assembly, homodimer. [4Fe-4S] cluster is required as a cofactor. [2Fe-2S] cluster serves as cofactor.

It catalyses the reaction (4R,5S)-dethiobiotin + (sulfur carrier)-SH + 2 reduced [2Fe-2S]-[ferredoxin] + 2 S-adenosyl-L-methionine = (sulfur carrier)-H + biotin + 2 5'-deoxyadenosine + 2 L-methionine + 2 oxidized [2Fe-2S]-[ferredoxin]. It functions in the pathway cofactor biosynthesis; biotin biosynthesis; biotin from 7,8-diaminononanoate: step 2/2. In terms of biological role, catalyzes the conversion of dethiobiotin (DTB) to biotin by the insertion of a sulfur atom into dethiobiotin via a radical-based mechanism. The chain is Biotin synthase from Methylorubrum populi (strain ATCC BAA-705 / NCIMB 13946 / BJ001) (Methylobacterium populi).